The following is a 337-amino-acid chain: Diacylglycerol O-acyltransferase 2-like protein 6 (337 aa).

Transmembrane regions (helical) follow at residues 22-42 and 102-122; these read IPVY…FLLF and YIIA…NFAT.

The protein belongs to the diacylglycerol acyltransferase family. As to expression, expressed in all tissues tested except pancreas.

It localises to the endoplasmic reticulum membrane. It carries out the reaction 1,2-di-(9Z-octadecenoyl)-sn-glycerol + (9Z)-octadecenoyl-CoA = 1,2,3-tri-(9Z-octadecenoyl)-glycerol + CoA. The catalysed reaction is 1-O-(9Z-octadecenyl)-glycerol + (9Z)-octadecenoyl-CoA = 1-O-(9Z-octadecyl)-3-(9Z-octadecenoyl)-glycerol + CoA. It catalyses the reaction 1-(9Z-octadecenoyl)-glycerol + (9Z)-octadecenoyl-CoA = 1,2-di-(9Z-octadecenoyl)-glycerol + CoA. Functionally, diglyceride acyltransferase that uses fatty acyl-CoA as substrate. Particularly active with oleate as a substrate. Has no wax synthase activity to produce wax esters. Able to use 1-monoalkylglycerol (1-MAkG) as an acyl acceptor for the synthesis of monoalkyl-monoacylglycerol (MAMAG). The sequence is that of Diacylglycerol O-acyltransferase 2-like protein 6 from Homo sapiens (Human).